The primary structure comprises 508 residues: Bifunctional purine biosynthesis protein PurH (508 aa).

Residues 1-144 (MTRALLSVSD…KNFAGVLPIV (144 aa)) form the MGS-like domain.

It belongs to the PurH family.

It catalyses the reaction (6R)-10-formyltetrahydrofolate + 5-amino-1-(5-phospho-beta-D-ribosyl)imidazole-4-carboxamide = 5-formamido-1-(5-phospho-D-ribosyl)imidazole-4-carboxamide + (6S)-5,6,7,8-tetrahydrofolate. The enzyme catalyses IMP + H2O = 5-formamido-1-(5-phospho-D-ribosyl)imidazole-4-carboxamide. The protein operates within purine metabolism; IMP biosynthesis via de novo pathway; 5-formamido-1-(5-phospho-D-ribosyl)imidazole-4-carboxamide from 5-amino-1-(5-phospho-D-ribosyl)imidazole-4-carboxamide (10-formyl THF route): step 1/1. Its pathway is purine metabolism; IMP biosynthesis via de novo pathway; IMP from 5-formamido-1-(5-phospho-D-ribosyl)imidazole-4-carboxamide: step 1/1. The protein is Bifunctional purine biosynthesis protein PurH of Leuconostoc citreum (strain KM20).